Here is a 324-residue protein sequence, read N- to C-terminus: Endochitinase A2 (324 aa).

A signal peptide spans 1-20 (MSKLRIPILLVLFIVSCCSA). Positions 21 to 61 (EQCGTQAGGALCPGGLCCSKFGWCGSTSEYCGDGCQSQCSG) constitute a Chitin-binding type-1 domain. 4 cysteine pairs are disulfide-bonded: Cys23/Cys38, Cys32/Cys44, Cys37/Cys51, and Cys55/Cys59. The active-site Proton donor is Glu133. Intrachain disulfides connect Cys151-Cys170 and Cys269-Cys301. Residues 310 to 324 (SLPLSSILLDTVAAA) constitute a propeptide, removed in mature form.

Belongs to the glycosyl hydrolase 19 family. Chitinase class I subfamily.

It catalyses the reaction Random endo-hydrolysis of N-acetyl-beta-D-glucosaminide (1-&gt;4)-beta-linkages in chitin and chitodextrins.. Its function is as follows. Defense against chitin-containing fungal pathogens. This Pisum sativum (Garden pea) protein is Endochitinase A2 (CHI2).